A 429-amino-acid chain; its full sequence is UDP-N-acetylglucosamine 1-carboxyvinyltransferase (429 aa).

22–23 contacts phosphoenolpyruvate; it reads KN. R93 serves as a coordination point for UDP-N-acetyl-alpha-D-glucosamine. C117 (proton donor) is an active-site residue. C117 bears the 2-(S-cysteinyl)pyruvic acid O-phosphothioketal mark. Residues 122-126, D307, and V329 contribute to the UDP-N-acetyl-alpha-D-glucosamine site; that span reads RPVDL.

Belongs to the EPSP synthase family. MurA subfamily.

It localises to the cytoplasm. It carries out the reaction phosphoenolpyruvate + UDP-N-acetyl-alpha-D-glucosamine = UDP-N-acetyl-3-O-(1-carboxyvinyl)-alpha-D-glucosamine + phosphate. It functions in the pathway cell wall biogenesis; peptidoglycan biosynthesis. Functionally, cell wall formation. Adds enolpyruvyl to UDP-N-acetylglucosamine. The chain is UDP-N-acetylglucosamine 1-carboxyvinyltransferase from Chloroherpeton thalassium (strain ATCC 35110 / GB-78).